The following is a 488-amino-acid chain: Histamine H1 receptor (488 aa).

Residues 1 to 38 (MSFLPGMTPVTLSNFSWALEDRMLEGNSTTTPTRQLMP) are Extracellular-facing. N-linked (GlcNAc...) asparagine glycans are attached at residues asparagine 14 and asparagine 27. The chain crosses the membrane as a helical span at residues 39-59 (LVVVLSSVSLVTVALNLLVLY). Residues 60–73 (AVRSERKLHTVGNL) lie on the Cytoplasmic side of the membrane. The helical transmembrane segment at 74–98 (YIVSLSVADLIVGAVVMPMSILYLH) threads the bilayer. Residues 99 to 106 (RSAWILGR) are Extracellular-facing. Residues 107–132 (PLCLFWLSMDYVASTASIFSVFILCI) traverse the membrane as a helical segment. Cysteine 109 and cysteine 189 form a disulfide bridge. Residues aspartate 116 and threonine 121 each contribute to the histamine site. The tract at residues 116 to 121 (DYVAST) is important for agonist binding. At 133–153 (DRYRSVQQPLRYLRYRTKTRA) the chain is on the cytoplasmic side. Phosphothreonine occurs at positions 149 and 151. A helical membrane pass occupies residues 154–173 (SATILGAWLLSFLWVIPILG). Residues 174-197 (WHHFMAPTSEPREKKCETDFYDVT) lie on the Extracellular side of the membrane. A helical membrane pass occupies residues 198–220 (WFKVMTAIINFYLPTLLMLWFYI). Asparagine 207 lines the histamine pocket. Over 221 to 417 (RIYKAVRRHC…LNRERKAAKQ (197 aa)) the chain is Cytoplasmic. Phosphoserine is present on serine 239. A compositionally biased stretch (basic and acidic residues) spans 259-274 (RMGKESPWEDPKRCSK). The tract at residues 259 to 285 (RMGKESPWEDPKRCSKDASGVHTPMPS) is disordered. 5 positions are modified to phosphoserine: serine 345, serine 381, serine 383, serine 397, and serine 399. Residues 418-441 (LGCIMAAFILCWIPYFVFFMVIAF) form a helical membrane-spanning segment. Residues 425–429 (FILCW) are important for agonist binding. Residue tyrosine 432 participates in histamine binding. Cysteines 442 and 445 form a disulfide. Residues 442-447 (CKSCSN) are Extracellular-facing. The chain crosses the membrane as a helical span at residues 448–470 (EPVHMFTIWLGYLNSTLNPLIYP). Over 471–488 (LCNENFRKTFKRILRIPP) the chain is Cytoplasmic.

The protein belongs to the G-protein coupled receptor 1 family. Post-translationally, phosphorylation at sites in the second and third cytoplasmic loops independently contribute to agonist-induced receptor down-regulation.

It localises to the cell membrane. G-protein-coupled receptor for histamine, a biogenic amine that functions as an immune modulator and a neurotransmitter. Through the H1 receptor, histamine mediates the contraction of smooth muscles and increases capillary permeability due to contraction of terminal venules. Also mediates neurotransmission in the central nervous system and thereby regulates circadian rhythms, emotional and locomotor activities as well as cognitive functions. The polypeptide is Histamine H1 receptor (Cavia porcellus (Guinea pig)).